A 780-amino-acid polypeptide reads, in one-letter code: Acetyl-CoA decarbonylase/synthase complex subunit alpha (780 aa).

The [4Fe-4S] cluster site is built by cysteine 73, cysteine 76, cysteine 77, cysteine 79, cysteine 84, and cysteine 93. Residue histidine 116 coordinates CO. The [Ni-4Fe-4S] cluster site is built by histidine 250, cysteine 278, and cysteine 317. 2 4Fe-4S ferredoxin-type domains span residues 399–429 and 440–469; these read IDEI…MDAV and LEEM…VSMV. Positions 409, 412, 415, 419, 449, 452, 455, and 459 each coordinate [4Fe-4S] cluster. [Ni-4Fe-4S] cluster-binding residues include cysteine 517, cysteine 546, and cysteine 581.

It belongs to the Ni-containing carbon monoxide dehydrogenase family. As to quaternary structure, heterotetramer of two alpha and two epsilon subunits. The ACDS complex is made up of alpha, epsilon, beta, gamma and delta subunits with a probable stoichiometry of (alpha(2)epsilon(2))(4)-beta(8)-(gamma(1)delta(1))(8). Requires [4Fe-4S] cluster as cofactor. [Ni-4Fe-4S] cluster is required as a cofactor.

It carries out the reaction CO + 2 oxidized [2Fe-2S]-[ferredoxin] + H2O = 2 reduced [2Fe-2S]-[ferredoxin] + CO2 + 2 H(+). In terms of biological role, part of the ACDS complex that catalyzes the reversible cleavage of acetyl-CoA, allowing autotrophic growth from CO(2). The alpha-epsilon subcomponent functions as a carbon monoxide dehydrogenase. The sequence is that of Acetyl-CoA decarbonylase/synthase complex subunit alpha from Methanothermobacter thermautotrophicus (strain ATCC 29096 / DSM 1053 / JCM 10044 / NBRC 100330 / Delta H) (Methanobacterium thermoautotrophicum).